We begin with the raw amino-acid sequence, 354 residues long: MARRIVILAGGTGGHVFPALAVAGKLRRAGAEVFWMGTRTGLEARVVPAAGYPIDWLSVSGIRGKGLASKAKAPAMLGLACLQALRILRRRKPDAVLGMGGFVAGPGGLMARVLGIPLIIHEQNRIPGTTNRWLSRIANRVLEAFPGAFQASAGAVCTGNPLRQGIETFRDHHTPRVGRHVLVLGGSLGAQALNRIVPRALARLGGEPVAIRHQTGQAMFQETQDLYQQLALTAKVDPFIEDMEEAYGWADLAICRAGAMTVSELAAAGLPAILVPFPYAIDDHQTANADYLAEAGAAVLMPQSSLDEVSLAVEIRALLDQRDRLEAMSAAARNLARYDAAESVAKVCLEEAGA.

Residues 12–14 (TGG), asparagine 124, arginine 163, serine 187, isoleucine 240, and glutamine 285 contribute to the UDP-N-acetyl-alpha-D-glucosamine site.

It belongs to the glycosyltransferase 28 family. MurG subfamily.

It is found in the cell inner membrane. The catalysed reaction is di-trans,octa-cis-undecaprenyl diphospho-N-acetyl-alpha-D-muramoyl-L-alanyl-D-glutamyl-meso-2,6-diaminopimeloyl-D-alanyl-D-alanine + UDP-N-acetyl-alpha-D-glucosamine = di-trans,octa-cis-undecaprenyl diphospho-[N-acetyl-alpha-D-glucosaminyl-(1-&gt;4)]-N-acetyl-alpha-D-muramoyl-L-alanyl-D-glutamyl-meso-2,6-diaminopimeloyl-D-alanyl-D-alanine + UDP + H(+). It functions in the pathway cell wall biogenesis; peptidoglycan biosynthesis. Its function is as follows. Cell wall formation. Catalyzes the transfer of a GlcNAc subunit on undecaprenyl-pyrophosphoryl-MurNAc-pentapeptide (lipid intermediate I) to form undecaprenyl-pyrophosphoryl-MurNAc-(pentapeptide)GlcNAc (lipid intermediate II). In Methylococcus capsulatus (strain ATCC 33009 / NCIMB 11132 / Bath), this protein is UDP-N-acetylglucosamine--N-acetylmuramyl-(pentapeptide) pyrophosphoryl-undecaprenol N-acetylglucosamine transferase.